The chain runs to 387 residues: Phosphoglycerate kinase (387 aa).

Substrate is bound by residues 21–23, arginine 36, and 59–62; these read DLN and HLGR. At lysine 84 the chain carries N6-acetyllysine. Residues arginine 113 and arginine 146 each contribute to the substrate site. ATP-binding positions include lysine 197, glutamate 314, and 340 to 343; that span reads GGDT.

This sequence belongs to the phosphoglycerate kinase family. Monomer.

The protein localises to the cytoplasm. It catalyses the reaction (2R)-3-phosphoglycerate + ATP = (2R)-3-phospho-glyceroyl phosphate + ADP. It participates in carbohydrate degradation; glycolysis; pyruvate from D-glyceraldehyde 3-phosphate: step 2/5. The chain is Phosphoglycerate kinase from Escherichia coli O139:H28 (strain E24377A / ETEC).